The chain runs to 377 residues: UPF0754 membrane protein GK0639 (377 aa).

The next 2 membrane-spanning stretches (helical) occupy residues 7–27 and 357–377; these read LLFM…IAIV and YLGA…GLWL.

Belongs to the UPF0754 family.

The protein localises to the cell membrane. This Geobacillus kaustophilus (strain HTA426) protein is UPF0754 membrane protein GK0639.